We begin with the raw amino-acid sequence, 369 residues long: Coiled-coil domain-containing protein 130 homolog (369 aa).

Basic and acidic residues predominate over residues 233–263 (TRYRDTKTHDDHLESSRDRIESRRIFRRPEE). The tract at residues 233–369 (TRYRDTKTHD…EYGNSSDDSD (137 aa)) is disordered. Low complexity predominate over residues 266-282 (TPSTSSGSSGGAVPSAS). Positions 283 to 297 (ERLKATMKAERDKRI) are enriched in basic and acidic residues. The span at 299–310 (ASFSTAGTSSAT) shows a compositional bias: low complexity.

It belongs to the CWC16 family.

In Caenorhabditis elegans, this protein is Coiled-coil domain-containing protein 130 homolog.